Consider the following 953-residue polypeptide: ABC transporter A family member 11 (953 aa).

The next 6 helical transmembrane spans lie at 33–53, 230–250, 277–297, 307–327, 341–361, and 417–437; these read CLQIFSSFFFILLIFCIEEAM, GPVFFLAFSMFGFVLQLGALV, TWEGILTLVSSLFLVLFGMIF, FVLVFLLFLLFQFNMIGLAFA, VGFLVFLIGFITQFVSATGFP, and VISINIIYQWLLGTFLFWFVL. Residues 519–764 form the ABC transporter domain; the sequence is VQIHGLAKTY…FGTGFVATVS (246 aa). An ATP-binding site is contributed by 565–572; it reads GPNGAGKT.

Belongs to the ABC transporter superfamily. ABCA family. CPR flippase (TC 3.A.1.211) subfamily.

Its subcellular location is the membrane. The sequence is that of ABC transporter A family member 11 (ABCA11) from Arabidopsis thaliana (Mouse-ear cress).